Here is a 222-residue protein sequence, read N- to C-terminus: Putative N-acetylmannosamine-6-phosphate 2-epimerase (222 aa).

This sequence belongs to the NanE family.

The enzyme catalyses an N-acyl-D-glucosamine 6-phosphate = an N-acyl-D-mannosamine 6-phosphate. Its pathway is amino-sugar metabolism; N-acetylneuraminate degradation; D-fructose 6-phosphate from N-acetylneuraminate: step 3/5. In terms of biological role, converts N-acetylmannosamine-6-phosphate (ManNAc-6-P) to N-acetylglucosamine-6-phosphate (GlcNAc-6-P). This chain is Putative N-acetylmannosamine-6-phosphate 2-epimerase, found in Oceanobacillus iheyensis (strain DSM 14371 / CIP 107618 / JCM 11309 / KCTC 3954 / HTE831).